A 172-amino-acid chain; its full sequence is Small ribosomal subunit protein bS6 (172 aa).

Residues 100–172 (LPAKRVVKTS…ENKEIEKKED (73 aa)) are disordered. Positions 107 to 172 (KTSEKNVKED…ENKEIEKKED (66 aa)) are enriched in basic and acidic residues.

Belongs to the bacterial ribosomal protein bS6 family.

Its function is as follows. Binds together with bS18 to 16S ribosomal RNA. The chain is Small ribosomal subunit protein bS6 from Prochlorococcus marinus (strain MIT 9211).